The chain runs to 288 residues: Homoserine kinase (288 aa).

79–89 contributes to the ATP binding site; it reads PPARGLGSSSA.

Belongs to the GHMP kinase family. Homoserine kinase subfamily.

Its subcellular location is the cytoplasm. The catalysed reaction is L-homoserine + ATP = O-phospho-L-homoserine + ADP + H(+). It functions in the pathway amino-acid biosynthesis; L-threonine biosynthesis; L-threonine from L-aspartate: step 4/5. Catalyzes the ATP-dependent phosphorylation of L-homoserine to L-homoserine phosphate. The polypeptide is Homoserine kinase (Listeria innocua serovar 6a (strain ATCC BAA-680 / CLIP 11262)).